A 418-amino-acid polypeptide reads, in one-letter code: tRNA-2-methylthio-N(6)-dimethylallyladenosine synthase (418 aa).

Residues 2–118 (PGYYLWTIGC…WGEIPEGFIL (117 aa)) form the MTTase N-terminal domain. 6 residues coordinate [4Fe-4S] cluster: cysteine 11, cysteine 47, cysteine 81, cysteine 134, cysteine 138, and cysteine 141. Residues 120–352 (LKPPVSASIT…DLQKETVSKA (233 aa)) form the Radical SAM core domain. Residues 354–414 (SALVDTFAEV…PWSLQAKLVK (61 aa)) enclose the TRAM domain.

Belongs to the methylthiotransferase family. MiaB subfamily. Monomer. [4Fe-4S] cluster serves as cofactor.

The protein localises to the cytoplasm. It catalyses the reaction N(6)-dimethylallyladenosine(37) in tRNA + (sulfur carrier)-SH + AH2 + 2 S-adenosyl-L-methionine = 2-methylsulfanyl-N(6)-dimethylallyladenosine(37) in tRNA + (sulfur carrier)-H + 5'-deoxyadenosine + L-methionine + A + S-adenosyl-L-homocysteine + 2 H(+). In terms of biological role, catalyzes the methylthiolation of N6-(dimethylallyl)adenosine (i(6)A), leading to the formation of 2-methylthio-N6-(dimethylallyl)adenosine (ms(2)i(6)A) at position 37 in tRNAs that read codons beginning with uridine. The polypeptide is tRNA-2-methylthio-N(6)-dimethylallyladenosine synthase (Dehalococcoides mccartyi (strain ATCC BAA-2266 / KCTC 15142 / 195) (Dehalococcoides ethenogenes (strain 195))).